The sequence spans 158 residues: 3-hydroxyacyl-[acyl-carrier-protein] dehydratase FabZ (158 aa).

Residue H57 is part of the active site.

It belongs to the thioester dehydratase family. FabZ subfamily.

Its subcellular location is the cytoplasm. It carries out the reaction a (3R)-hydroxyacyl-[ACP] = a (2E)-enoyl-[ACP] + H2O. In terms of biological role, involved in unsaturated fatty acids biosynthesis. Catalyzes the dehydration of short chain beta-hydroxyacyl-ACPs and long chain saturated and unsaturated beta-hydroxyacyl-ACPs. The chain is 3-hydroxyacyl-[acyl-carrier-protein] dehydratase FabZ from Helicobacter acinonychis (strain Sheeba).